Reading from the N-terminus, the 296-residue chain is CDP-diacylglycerol--glycerol-3-phosphate 3-phosphatidyltransferase 1, chloroplastic/mitochondrial (296 aa).

A chloroplast and mitochondrion-targeting transit peptide spans 1 to 39 (MLRSGLASLIVDVNLRRTLRPSPTFSFPAHLSRCIITSR). Residues 62 to 82 (FSSSSSSEQSRPTSSSRNSFS) show a composition bias toward low complexity. The tract at residues 62–103 (FSSSSSSEQSRPTSSSRNSFSGHGQLDSDDNSSPPPSQSSSK) is disordered. 5 helical membrane-spanning segments follow: residues 104–124 (VLTL…LLVA), 126–146 (FYVD…AAAI), 164–184 (FGAF…LILL), 189–209 (IQVA…IAII), and 261–281 (VGWL…LSVW).

Belongs to the CDP-alcohol phosphatidyltransferase class-I family. The cofactor is Mn(2+).

It localises to the plastid. It is found in the chloroplast membrane. The protein resides in the mitochondrion membrane. The catalysed reaction is a CDP-1,2-diacyl-sn-glycerol + sn-glycerol 3-phosphate = a 1,2-diacyl-sn-glycero-3-phospho-(1'-sn-glycero-3'-phosphate) + CMP + H(+). Its pathway is phospholipid metabolism; phosphatidylglycerol biosynthesis; phosphatidylglycerol from CDP-diacylglycerol: step 1/2. Functionally, catalyzes the committed step to the synthesis of the acidic phospholipids, including phosphatidylglycerol (PG). Transfers specifically a phosphatidyl group from CDP-diacylglycerol to glycerol-3-phosphate to form phosphatidylglycerophosphate. Cannot catalyze the phosphatidyl group transfer to inositol, serine, choline or phosphatidylglycerol. Possesses high activity with CDP-dipalmitoylglycerol and low activity with CDP-dioleoylglycerol. Essential for chloroplast differentiation and PG accumulation in thylakoids, an essential process for the assembly of antenna-reaction center complexes to optimize energy transfer from antenna pigments, and for subsequent photochemical efficiency of photosystem II (PSII). During cold acclimation (at 5 degrees Celsius), necessary for the photosystem I (PSI) photochemistry, including both reaction center and light-harvesting integrity. But dispensable in mitochondrion, being redundant with PGPS2 for the production of PG and its derivative cardiolipin (CL) in mitochondrial membranes. Together with PGPS2, required for the proper embryo development by providing PG accurate levels. This Arabidopsis thaliana (Mouse-ear cress) protein is CDP-diacylglycerol--glycerol-3-phosphate 3-phosphatidyltransferase 1, chloroplastic/mitochondrial.